The primary structure comprises 523 residues: Jerky protein homolog-like (523 aa).

In terms of domain architecture, HTH psq-type spans 1 to 52 (MSGKRKRVVLTIKDKLDIIKKLEDGGSSKQLAVIYGIGETTVRDIRKNKEKI). DNA-binding regions (H-T-H motif) lie at residues 28–48 (SKQLAVIYGIGETTVRDIRKN) and 100–132 (PICAKRAEFFFYALGMDGDFNPSAGWLTRFKQR). One can recognise an HTH CENPB-type domain in the interval 67-139 (KRKSMKPSMY…KQRHSIREIN (73 aa)). Residues 168–385 (LQPEQIYNAD…VKPVTISRAW (218 aa)) enclose the DDE-1 domain.

Belongs to the tigger transposable element derived protein family.

The protein localises to the nucleus. The polypeptide is Jerky protein homolog-like (Jrkl) (Mus musculus (Mouse)).